The chain runs to 715 residues: Fatty acid oxidation complex subunit alpha (715 aa).

Residues 1-189 (MIYQGETLSV…KVGAIDAVVA (189 aa)) form an enoyl-CoA hydratase/isomerase region. D296 is a binding site for substrate. Residues 311-715 (AKATRHAAVL…EMAAQGKTFY (405 aa)) form a 3-hydroxyacyl-CoA dehydrogenase region. Residues M325, D344, 401-403 (VVE), K408, and S430 contribute to the NAD(+) site. Residue H451 is the For 3-hydroxyacyl-CoA dehydrogenase activity of the active site. Position 454 (N454) interacts with NAD(+). Positions 501 and 661 each coordinate substrate.

This sequence in the N-terminal section; belongs to the enoyl-CoA hydratase/isomerase family. The protein in the C-terminal section; belongs to the 3-hydroxyacyl-CoA dehydrogenase family. In terms of assembly, heterotetramer of two alpha chains (FadB) and two beta chains (FadA).

The enzyme catalyses a (3S)-3-hydroxyacyl-CoA + NAD(+) = a 3-oxoacyl-CoA + NADH + H(+). It catalyses the reaction a (3S)-3-hydroxyacyl-CoA = a (2E)-enoyl-CoA + H2O. The catalysed reaction is a 4-saturated-(3S)-3-hydroxyacyl-CoA = a (3E)-enoyl-CoA + H2O. It carries out the reaction (3S)-3-hydroxybutanoyl-CoA = (3R)-3-hydroxybutanoyl-CoA. The enzyme catalyses a (3Z)-enoyl-CoA = a 4-saturated (2E)-enoyl-CoA. It catalyses the reaction a (3E)-enoyl-CoA = a 4-saturated (2E)-enoyl-CoA. It functions in the pathway lipid metabolism; fatty acid beta-oxidation. In terms of biological role, involved in the aerobic and anaerobic degradation of long-chain fatty acids via beta-oxidation cycle. Catalyzes the formation of 3-oxoacyl-CoA from enoyl-CoA via L-3-hydroxyacyl-CoA. It can also use D-3-hydroxyacyl-CoA and cis-3-enoyl-CoA as substrate. This chain is Fatty acid oxidation complex subunit alpha, found in Aeromonas salmonicida (strain A449).